Consider the following 883-residue polypeptide: Glutamate receptor 2 (883 aa).

A signal peptide spans 1 to 24; that stretch reads MQKIMHISVLLSPILWGLIFGVSS. Over 25–543 the chain is Extracellular; the sequence is NSIQIGGLFP…GVFSFLDPLA (519 aa). Cysteines 78 and 330 form a disulfide. N-linked (GlcNAc...) asparagine glycans are attached at residues asparagine 256, asparagine 370, asparagine 406, and asparagine 413. Positions 499, 501, and 506 each coordinate L-glutamate. A helical transmembrane segment spans residues 544 to 564; it reads YEIWMCIVFAYIGVSVVLFLV. Over 565 to 591 the chain is Cytoplasmic; the sequence is SRFSPYEWHTEEFEDGRETQSSESTNE. Residues 592 to 607 constitute an intramembrane region (helical; Pore-forming); that stretch reads FGIFNSLWFSLGAFMR. The stretch at 608–610 is an intramembrane region; sequence QGC. Cysteine 610 carries the S-palmitoyl cysteine lipid modification. Topologically, residues 611-616 are cytoplasmic; it reads DISPRS. Residues 617-637 form a helical membrane-spanning segment; that stretch reads LSGRIVGGVWWFFTLIIISSY. Topologically, residues 638 to 812 are extracellular; it reads TANLAAFLTV…EKTSALSLSN (175 aa). L-glutamate-binding residues include serine 675 and threonine 676. Serine 683 is modified (phosphoserine; by PKC). A Phosphoserine; by PKG modification is found at serine 717. Glutamate 726 is a binding site for L-glutamate. Cysteine 739 and cysteine 794 are disulfide-bonded. A helical transmembrane segment spans residues 813 to 833; that stretch reads VAGVFYILVGGLGLAMLVALI. At 834 to 883 the chain is on the cytoplasmic side; sequence EFCYKSRAEAKRMKVAKNAQNINPSSSQNSQNFATYKEGYNVYGIESVKI. A lipid anchor (S-palmitoyl cysteine) is attached at cysteine 836. Residues serine 860 and serine 863 each carry the phosphoserine modification. Residues 867 to 877 are required for interaction with IQSEC1; the sequence is ATYKEGYNVYG. Residue tyrosine 876 is modified to Phosphotyrosine. Residue serine 880 is modified to Phosphoserine.

This sequence belongs to the glutamate-gated ion channel (TC 1.A.10.1) family. GRIA2 subfamily. Homotetramer or heterotetramer of pore-forming glutamate receptor subunits. Tetramers may be formed by the dimerization of dimers. May interact with MPP4. Forms a ternary complex with GRIP1 and CSPG4. Interacts with ATAD1 in an ATP-dependent manner. ATAD1-catalyzed ATP hydrolysis disrupts binding to ATAD1 and to GRIP1 and leads to AMPAR complex disassembly. Interacts with GRIP1 and GRIP2. Interacts with NSF via its C-terminus. Isoform 1, but not isoform 3, interacts with PICK1. Interacts with CACNG2. Interacts with GRIA1 and SYNDIG1. Part of a complex containing GRIA2, NSF and NAPA and/or NAPB. Interacts with SNX27 (via PDZ domain); the interaction is required for recycling to the plasma membrane when endocytosed and prevent degradation in lysosomes. Interacts with LRFN1. Found in a complex with GRIA1, GRIA3, GRIA4, CNIH2, CNIH3, CACNG2, CACNG3, CACNG4, CACNG5, CACNG7 and CACNG8. Interacts with CACNG5. Interacts with OLFM2. Interacts with AP4B1, AP4E1 and AP4M1; probably indirect it mediates the somatodendritic localization of GRIA2 in neurons. Forms a complex with GRIP1, NSG1 and STX12; controls the intracellular fate of AMPAR and the endosomal sorting of the GRIA2 subunit toward recycling and membrane targeting. Interacts with IQSEC1; the interaction is required for ARF6 activation. Interacts (heterotetramer form) with CNIH2 and CNIH3; this interaction promotes expression at the plasma membrane and extensively modulates their gating properties by slowing deactivation and desensitization kinetics. Phosphorylation at Tyr-876 is required for interaction with IQSEC1 and ARF6 activation, which in turn triggers AMPAR internalization for persistent synaptic depression. In terms of processing, palmitoylated. Depalmitoylated upon L-glutamate stimulation. ZDHHC3/GODZ specifically palmitoylates Cys-610, which leads to Golgi retention and decreased cell surface expression. In contrast, Cys-836 palmitoylation does not affect cell surface expression but regulates stimulation-dependent endocytosis. Post-translationally, N-glycosylated. Ubiquitinated by RNF167, leading to its degradation.

The protein resides in the cell membrane. It is found in the postsynaptic cell membrane. It localises to the postsynaptic density membrane. It catalyses the reaction Ca(2+)(in) = Ca(2+)(out). The catalysed reaction is Na(+)(in) = Na(+)(out). Ionotropic glutamate receptor that functions as a ligand-gated cation channel, gated by L-glutamate and glutamatergic agonists such as alpha-amino-3-hydroxy-5-methyl-4-isoxazolepropionic acid (AMPA), quisqualic acid, and kainic acid. L-glutamate acts as an excitatory neurotransmitter at many synapses in the central nervous system and plays an important role in fast excitatory synaptic transmission. Binding of the excitatory neurotransmitter L-glutamate induces a conformation change, leading to the opening of the cation channel, and thereby converts the chemical signal to an electrical impulse upon entry of monovalent and divalent cations such as sodium and calcium. The receptor then desensitizes rapidly and enters in a transient inactive state, characterized by the presence of bound agonist. In the presence of CACNG4 or CACNG7 or CACNG8, shows resensitization which is characterized by a delayed accumulation of current flux upon continued application of L-glutamate. Through complex formation with NSG1, GRIP1 and STX12 controls the intracellular fate of AMPAR and the endosomal sorting of the GRIA2 subunit toward recycling and membrane targeting. This chain is Glutamate receptor 2, found in Macaca fascicularis (Crab-eating macaque).